The chain runs to 148 residues: Dermatopontin (148 aa).

A disulfide bridge connects residues cysteine 14 and cysteine 40. Asparagine 44 carries an N-linked (GlcNAc...) asparagine glycan. 2 disulfides stabilise this stretch: cysteine 66–cysteine 93 and cysteine 103–cysteine 147.

This sequence belongs to the dermatopontin family. Post-translationally, the terminal mannose residues of the polysaccharide are 3-O-methylated. No tyrosine sulfation was detected.

It localises to the secreted. It is found in the extracellular space. The protein localises to the extracellular matrix. In terms of biological role, seems to mediate adhesion by cell surface integrin binding. The chain is Dermatopontin from Biomphalaria glabrata (Bloodfluke planorb).